Here is a 310-residue protein sequence, read N- to C-terminus: Cytosolic Fe-S cluster assembly factor Nubp1 homolog (310 aa).

The [4Fe-4S] cluster site is built by Cys-9, Cys-23, Cys-26, and Cys-32. Position 63-70 (63-70 (GKGGVGKS)) interacts with ATP. Positions 240 and 243 each coordinate [4Fe-4S] cluster.

Belongs to the Mrp/NBP35 ATP-binding proteins family. NUBP1/NBP35 subfamily. In terms of assembly, heterotetramer of 2 Nubp1 and 2 Nubp2 chains. [4Fe-4S] cluster is required as a cofactor.

The protein resides in the cytoplasm. Component of the cytosolic iron-sulfur (Fe/S) protein assembly (CIA) machinery. Required for maturation of extramitochondrial Fe-S proteins. The Nubp1-Nubp2 heterotetramer forms a Fe-S scaffold complex, mediating the de novo assembly of an Fe-S cluster and its transfer to target apoproteins. The polypeptide is Cytosolic Fe-S cluster assembly factor Nubp1 homolog (Drosophila virilis (Fruit fly)).